A 980-amino-acid chain; its full sequence is Phosphoenolpyruvate carboxylase (980 aa).

Active-site residues include His182 and Lys625.

Belongs to the PEPCase type 1 family. Requires Mg(2+) as cofactor.

The catalysed reaction is oxaloacetate + phosphate = phosphoenolpyruvate + hydrogencarbonate. Forms oxaloacetate, a four-carbon dicarboxylic acid source for the tricarboxylic acid cycle. The protein is Phosphoenolpyruvate carboxylase of Bordetella pertussis (strain Tohama I / ATCC BAA-589 / NCTC 13251).